A 404-amino-acid chain; its full sequence is Phosphopentomutase (404 aa).

Positions 10, 303, 308, 344, 345, and 356 each coordinate Mn(2+).

Belongs to the phosphopentomutase family. It depends on Mn(2+) as a cofactor.

The protein resides in the cytoplasm. It carries out the reaction 2-deoxy-alpha-D-ribose 1-phosphate = 2-deoxy-D-ribose 5-phosphate. The catalysed reaction is alpha-D-ribose 1-phosphate = D-ribose 5-phosphate. It functions in the pathway carbohydrate degradation; 2-deoxy-D-ribose 1-phosphate degradation; D-glyceraldehyde 3-phosphate and acetaldehyde from 2-deoxy-alpha-D-ribose 1-phosphate: step 1/2. In terms of biological role, isomerase that catalyzes the conversion of deoxy-ribose 1-phosphate (dRib-1-P) and ribose 1-phosphate (Rib-1-P) to deoxy-ribose 5-phosphate (dRib-5-P) and ribose 5-phosphate (Rib-5-P), respectively. This chain is Phosphopentomutase, found in Shewanella baltica (strain OS223).